An 88-amino-acid polypeptide reads, in one-letter code: UPF0250 protein Ssed_3490 (88 aa).

It belongs to the UPF0250 family.

This is UPF0250 protein Ssed_3490 from Shewanella sediminis (strain HAW-EB3).